A 270-amino-acid polypeptide reads, in one-letter code: MNCFQEKQFSRENLLKMPFRMVLTGGSGSGKTIYLLSLFSTLVKKYKHIFLFTPVYNPDYDGYIWPNHINFVSSQESLEYNLIRTKSNIEKCIAVAQNHKKSAHFLLIFDDVGDKLSKCNTLIEFLNFGRHLNTSIILLCQTYRHVPILGRANITHFCSFNISISDAENMLRSMPVKGKRKDILNMLNMIQTARSNNRLAIIIEDSVFCEGELRICTDTADKDVIEQKLNIDILVNQYSHMKKNLNAILESKKTKLCNSDQSSSSKNVSS.

55 to 62 (VYNPDYDG) serves as a coordination point for ATP.

Belongs to the orthopoxvirus OPG160 protein family. In terms of assembly, interacts with protein OPG137.

Its function is as follows. Participates in viral DNA packaging and virion morphogenesis. The protein is DNA packaging protein OPG160 (OPG160) of Homo sapiens (Human).